Reading from the N-terminus, the 360-residue chain is uncharacterized protein (360 aa).

Residues 4–235 (LSLQHIQKIY…PANMFVAGFI (232 aa)) enclose the ABC transporter domain. ATP is bound at residue 37 to 44 (GPSGCGKS).

Belongs to the ABC transporter superfamily.

This is an uncharacterized protein from Escherichia coli O6:H1 (strain CFT073 / ATCC 700928 / UPEC).